The following is a 292-amino-acid chain: Enoyl-CoA hydratase domain-containing protein 2, mitochondrial (292 aa).

Residues 1–35 (MLRVLCLLRPWRPLRARGCASDGAAGGSEIQVRAL) constitute a mitochondrion transit peptide. Lysine 97 is modified (N6-acetyllysine; alternate). The residue at position 97 (lysine 97) is an N6-succinyllysine; alternate.

It belongs to the enoyl-CoA hydratase/isomerase family.

Its subcellular location is the mitochondrion. The chain is Enoyl-CoA hydratase domain-containing protein 2, mitochondrial (ECHDC2) from Homo sapiens (Human).